A 99-amino-acid chain; its full sequence is Aspartyl/glutamyl-tRNA(Asn/Gln) amidotransferase subunit C (99 aa).

This sequence belongs to the GatC family. In terms of assembly, heterotrimer of A, B and C subunits.

The catalysed reaction is L-glutamyl-tRNA(Gln) + L-glutamine + ATP + H2O = L-glutaminyl-tRNA(Gln) + L-glutamate + ADP + phosphate + H(+). It carries out the reaction L-aspartyl-tRNA(Asn) + L-glutamine + ATP + H2O = L-asparaginyl-tRNA(Asn) + L-glutamate + ADP + phosphate + 2 H(+). In terms of biological role, allows the formation of correctly charged Asn-tRNA(Asn) or Gln-tRNA(Gln) through the transamidation of misacylated Asp-tRNA(Asn) or Glu-tRNA(Gln) in organisms which lack either or both of asparaginyl-tRNA or glutaminyl-tRNA synthetases. The reaction takes place in the presence of glutamine and ATP through an activated phospho-Asp-tRNA(Asn) or phospho-Glu-tRNA(Gln). The chain is Aspartyl/glutamyl-tRNA(Asn/Gln) amidotransferase subunit C from Burkholderia lata (strain ATCC 17760 / DSM 23089 / LMG 22485 / NCIMB 9086 / R18194 / 383).